Here is a 267-residue protein sequence, read N- to C-terminus: Cilia- and flagella-associated protein 300 (267 aa).

It belongs to the CFAP300 family. In terms of assembly, interacts with DNAAF2. In terms of tissue distribution, expressed in nasal epithelial cells.

It is found in the cytoplasm. The protein resides in the cytoskeleton. Its subcellular location is the cilium axoneme. In terms of biological role, cilium- and flagellum-specific protein that plays a role in axonemal structure organization and motility. May play a role in outer and inner dynein arm assembly. The sequence is that of Cilia- and flagella-associated protein 300 from Homo sapiens (Human).